The sequence spans 895 residues: Zinc finger protein 281 (895 aa).

2 disordered regions span residues 1-44 and 63-113; these read MKIG…EMEP and FTRP…AFPS. Residue Lys2 forms a Glycyl lysine isopeptide (Lys-Gly) (interchain with G-Cter in SUMO2) linkage. Positions 7–36 are enriched in gly residues; the sequence is FLSGGGGTGSSGGSGSGGGGSGGGGGGGSS. Residues Arg65, Lys101, and Lys128 each participate in a glycyl lysine isopeptide (Lys-Gly) (interchain with G-Cter in SUMO2) cross-link. 2 stretches are compositionally biased toward basic and acidic residues: residues 130 to 140 and 202 to 218; these read EKPADPEEQQS and RTDD…DTNV. Disordered stretches follow at residues 130–149 and 183–253; these read EKPA…HHHY and HVQQ…EGAI. Residues Lys213, Lys219, Lys225, Lys232, Lys242, and Lys259 each participate in a glycyl lysine isopeptide (Lys-Gly) (interchain with G-Cter in SUMO2) cross-link. C2H2-type zinc fingers lie at residues 261-283, 289-311, and 317-339; these read HICD…VLIH, FQCS…EKIH, and FGCD…KRTH. Residues Lys301 and Lys325 each participate in a glycyl lysine isopeptide (Lys-Gly) (interchain with G-Cter in SUMO2) cross-link. The C2H2-type 4; atypical zinc finger occupies 345 to 367; it reads YKCDTCQQYFSRTDRLLKHRRTC. Lys373 is covalently cross-linked (Glycyl lysine isopeptide (Lys-Gly) (interchain with G-Cter in SUMO2)). Positions 377–427 are disordered; the sequence is SAEPGSSNHTNMGNLAVLSQGNTSSSRRKTKSKSIAIENKEQKTGKTNESQ. A compositionally biased stretch (polar residues) spans 379–398; it reads EPGSSNHTNMGNLAVLSQGN. Ser395 is modified (phosphoserine). Residues Lys409, Lys416, Lys460, and Lys477 each participate in a glycyl lysine isopeptide (Lys-Gly) (interchain with G-Cter in SUMO2) cross-link. Ser484 bears the Phosphoserine mark. Glycyl lysine isopeptide (Lys-Gly) (interchain with G-Cter in SUMO2) cross-links involve residues Lys493, Lys498, Lys539, Lys599, Lys617, and Lys622. A disordered region spans residues 638–660; sequence SGEHSELVQEENLSPGTQTPSND. Positions 648-660 are enriched in polar residues; the sequence is ENLSPGTQTPSND. Ser651 carries the post-translational modification Phosphoserine. Glycyl lysine isopeptide (Lys-Gly) (interchain with G-Cter in SUMO2) cross-links involve residues Lys661 and Lys670. Positions 778-789 are enriched in polar residues; that stretch reads SSAFQSSSQKLT. Residues 778–817 form a disordered region; the sequence is SSAFQSSSQKLTSQKEQKNLESSTGFQIPSQELASQIDPQ. The residue at position 785 (Ser785) is a Phosphoserine. Residues Lys787, Lys792, and Lys795 each participate in a glycyl lysine isopeptide (Lys-Gly) (interchain with G-Cter in SUMO2) cross-link. A compositionally biased stretch (polar residues) spans 797 to 815; it reads LESSTGFQIPSQELASQID. Position 807 is a phosphoserine (Ser807). Residues Lys818 and Lys840 each participate in a glycyl lysine isopeptide (Lys-Gly) (interchain with G-Cter in SUMO2) cross-link. Position 888 is a phosphothreonine (Thr888).

The protein belongs to the krueppel C2H2-type zinc-finger protein family.

It localises to the nucleus. Functionally, transcription repressor that plays a role in regulation of embryonic stem cells (ESCs) differentiation. Required for ESCs differentiation and acts by mediating autorepression of NANOG in ESCs: binds to the NANOG promoter and promotes association of NANOG protein to its own promoter and recruits the NuRD complex, which deacetylates histones. Not required for establishement and maintenance of ESCs. Represses the transcription of a number of genes including GAST, ODC1 and VIM. Binds to the G-rich box in the enhancer region of these genes. In Homo sapiens (Human), this protein is Zinc finger protein 281 (ZNF281).